The primary structure comprises 467 residues: Mothers against decapentaplegic homolog 2 (467 aa).

N-acetylserine is present on S2. Residue T8 is modified to Phosphothreonine. Residues 10–176 (PVVKRLLGWK…YQRVETPVLP (167 aa)) form the MH1 domain. Residue K19 is modified to N6-acetyllysine. The Zn(2+) site is built by C74, C149, C161, and H166. A compositionally biased stretch (polar residues) spans 207–217 (PAGIEPQSNYI). A disordered region spans residues 207–251 (PAGIEPQSNYIPETPPPGYISEDGETSDQQLNQSMDTGSPAELSP). Residue T220 is modified to Phosphothreonine. A PY-motif motif is present at residues 221–225 (PPPGY). Residues 233–243 (SDQQLNQSMDT) are compositionally biased toward polar residues. S240 carries the phosphoserine; by CAMK2 modification. A phosphoserine mark is found at S245, S250, S255, S458, S460, and S464. The region spanning 274–467 (WCSIAYYELN…SPSVRCSSMS (194 aa)) is the MH2 domain. 2 positions are modified to phosphoserine; by TGFBR1: S465 and S467.

This sequence belongs to the dwarfin/SMAD family. As to quaternary structure, monomer; in the absence of TGF-beta. Heterodimer; in the presence of TGF-beta. Forms a heterodimer with co-SMAD, SMAD4, in the nucleus to form the transactivation complex SMAD2/SMAD4. Found in a complex with SMAD3 and TRIM33 upon addition of TGF-beta. Identified in a complex that contains at least ZNF451, SMAD2, SMAD3 and SMAD4. Interacts (via the MH2 domain) with ZFYVE9; may form trimers with the SMAD4 co-SMAD. Interacts with TAZ/WWRT1. Interacts with FOXH1. Interacts with SNW1. Interacts with CREB-binding protein (CBP) and EP300. Interacts with SNON. Interacts with ALK4/ACVR1B. Interacts with SKOR1. Interacts with SKOR2. Interacts with PRDM16. Interacts (via MH2 domain) with LEMD3. Interacts with RBPMS. Interacts with WWP1. Interacts (dephosphorylated form, via the MH1 and MH2 domains) with RANBP3 (via its C-terminal R domain); the interaction results in the export of dephosphorylated SMAD3 out of the nucleus and termination of the TGF-beta signaling. Interacts with PDPK1 (via PH domain). Interacts with DAB2; the interactions are enhanced upon TGF-beta stimulation. Interacts with USP15. Interacts with PPP5C. Interacts with LDLRAD4 (via the SMAD interaction motif). Interacts (via MH2 domain) with PMEPA1 (via the SMAD interaction motif). Interacts with ZFHX3. Interacts with ZNF451. Interacts with SMURF2 when phosphorylated on Ser-465/467. Interacts with PPM1A. Interacts with TGF-beta. Interacts with TGFBR1. Interacts with TGIF. Interacts with SMAD3 and TRIM33. Interacts with ZNF580. Interacts with NEDD4L in response to TGF-beta. Interacts with HGS. Interacts with AIP1. Interacts with WWP1. Interacts with PML. Interacts weakly with ZNF8. Interacts (when phosphorylated) with RNF111; RNF111 acts as an enhancer of the transcriptional responses by mediating ubiquitination and degradation of SMAD2 inhibitors. Interacts with YAP1 (when phosphorylated at 'Ser-112'). Interacts when phosphorylated with IPO7; the interaction facilitates translocation of SMAD2 to the nucleus. Interacts with MTMR4; negatively regulates TGF-beta signaling through SMAD2 dephosphorylation and retention in endosomes. In response to TGF-beta, phosphorylated on the C-terminal SXS motif by TGF-beta and activin type 1 receptor kinases, phosphorylation declines progressively in a KMT5A-dependent manner. Phosphorylation in this motif is required for interaction with a number of proteins including SMURF2, SNON and SMAD4 in response to TGF-beta. Dephosphorylated in this motif by PPM1A leading to disruption of the SMAD2/3-SMAD4 complex, nuclear export and termination of the TGF-beta signaling. In response to decorin, the naturally occurring inhibitor of TGF-beta signaling, phosphorylated on Ser-240 by CaMK2. Phosphorylated by MAPK3 upon EGF stimulation; which increases transcriptional activity and stability, and is blocked by calmodulin. Phosphorylated by PDPK1. In terms of processing, acetylated on Lys-19 by coactivators in response to TGF-beta signaling, which increases transcriptional activity. Post-translationally, in response to TGF-beta, ubiquitinated by NEDD4L; which promotes its degradation. Monoubiquitinated, leading to prevent DNA-binding. Deubiquitination by USP15 alleviates inhibition and promotes activation of TGF-beta target genes. Ubiquitinated by RNF111, leading to its degradation: only SMAD2 proteins that are 'in use' are targeted by RNF111, RNF111 playing a key role in activating SMAD2 and regulating its turnover. In terms of tissue distribution, expressed in cardiomyocytes.

It is found in the cytoplasm. The protein resides in the nucleus. Functionally, receptor-regulated SMAD (R-SMAD) that is an intracellular signal transducer and transcriptional modulator activated by TGF-beta (transforming growth factor) and activin type 1 receptor kinases. Binds the TRE element in the promoter region of many genes that are regulated by TGF-beta and, on formation of the SMAD2/SMAD4 complex, activates transcription. Promotes TGFB1-mediated transcription of odontoblastic differentiation genes in dental papilla cells. Positively regulates PDPK1 kinase activity by stimulating its dissociation from the 14-3-3 protein YWHAQ which acts as a negative regulator. In Rattus norvegicus (Rat), this protein is Mothers against decapentaplegic homolog 2 (Smad2).